The following is a 261-amino-acid chain: Phosphatidylglycerol--prolipoprotein diacylglyceryl transferase (261 aa).

The next 3 helical transmembrane spans lie at 20-40 (LAIH…VWLA), 54-74 (IIDF…LYYV), and 94-114 (GGGA…VFSY). An a 1,2-diacyl-sn-glycero-3-phospho-(1'-sn-glycerol)-binding site is contributed by Arg-139. 3 helical membrane passes run 175 to 195 (MPTF…VMVF), 205 to 225 (GDIF…VEGM), and 235 to 255 (ARVS…LFIY).

Belongs to the Lgt family.

Its subcellular location is the cell membrane. The enzyme catalyses L-cysteinyl-[prolipoprotein] + a 1,2-diacyl-sn-glycero-3-phospho-(1'-sn-glycerol) = an S-1,2-diacyl-sn-glyceryl-L-cysteinyl-[prolipoprotein] + sn-glycerol 1-phosphate + H(+). It participates in protein modification; lipoprotein biosynthesis (diacylglyceryl transfer). Catalyzes the transfer of the diacylglyceryl group from phosphatidylglycerol to the sulfhydryl group of the N-terminal cysteine of a prolipoprotein, the first step in the formation of mature lipoproteins. This is Phosphatidylglycerol--prolipoprotein diacylglyceryl transferase from Lactococcus lactis subsp. lactis (strain IL1403) (Streptococcus lactis).